We begin with the raw amino-acid sequence, 261 residues long: 5'-nucleotidase SurE (261 aa).

Residues Asp17, Asp18, Ser48, and Asn104 each coordinate a divalent metal cation.

The protein belongs to the SurE nucleotidase family. Requires a divalent metal cation as cofactor.

Its subcellular location is the cytoplasm. It catalyses the reaction a ribonucleoside 5'-phosphate + H2O = a ribonucleoside + phosphate. In terms of biological role, nucleotidase that shows phosphatase activity on nucleoside 5'-monophosphates. The chain is 5'-nucleotidase SurE from Deinococcus geothermalis (strain DSM 11300 / CIP 105573 / AG-3a).